Consider the following 117-residue polypeptide: Small ribosomal subunit protein bS6 (117 aa).

The interval 96-117 is disordered; the sequence is KEAAAPAPKAAPVESAPAVEAE. Low complexity predominate over residues 99–117; the sequence is AAPAPKAAPVESAPAVEAE.

The protein belongs to the bacterial ribosomal protein bS6 family.

In terms of biological role, binds together with bS18 to 16S ribosomal RNA. This chain is Small ribosomal subunit protein bS6, found in Geobacter sulfurreducens (strain ATCC 51573 / DSM 12127 / PCA).